The chain runs to 259 residues: Ribonuclease HII (259 aa).

The 189-residue stretch at 70–258 (TLIVGIDEVG…VKSLVLGKKE (189 aa)) folds into the RNase H type-2 domain. A divalent metal cation is bound by residues Asp-76, Glu-77, and Asp-168.

It belongs to the RNase HII family. The cofactor is Mn(2+). Requires Mg(2+) as cofactor.

It is found in the cytoplasm. It carries out the reaction Endonucleolytic cleavage to 5'-phosphomonoester.. Its function is as follows. Endonuclease that specifically degrades the RNA of RNA-DNA hybrids. The chain is Ribonuclease HII from Streptococcus pneumoniae (strain ATCC 700669 / Spain 23F-1).